The chain runs to 122 residues: Prefoldin subunit 1 (122 aa).

Alanine 2 carries the post-translational modification N-acetylalanine.

It belongs to the prefoldin subunit beta family. Heterohexamer of two PFD-alpha type and four PFD-beta type subunits.

Functionally, binds specifically to cytosolic chaperonin (c-CPN) and transfers target proteins to it. Binds to nascent polypeptide chain and promotes folding in an environment in which there are many competing pathways for nonnative proteins. The sequence is that of Prefoldin subunit 1 (Pfdn1) from Mus musculus (Mouse).